Reading from the N-terminus, the 205-residue chain is ATP phosphoribosyltransferase (205 aa).

It belongs to the ATP phosphoribosyltransferase family. Short subfamily. Heteromultimer composed of HisG and HisZ subunits.

The protein localises to the cytoplasm. It catalyses the reaction 1-(5-phospho-beta-D-ribosyl)-ATP + diphosphate = 5-phospho-alpha-D-ribose 1-diphosphate + ATP. It participates in amino-acid biosynthesis; L-histidine biosynthesis; L-histidine from 5-phospho-alpha-D-ribose 1-diphosphate: step 1/9. Catalyzes the condensation of ATP and 5-phosphoribose 1-diphosphate to form N'-(5'-phosphoribosyl)-ATP (PR-ATP). Has a crucial role in the pathway because the rate of histidine biosynthesis seems to be controlled primarily by regulation of HisG enzymatic activity. The polypeptide is ATP phosphoribosyltransferase (Staphylococcus carnosus (strain TM300)).